The sequence spans 206 residues: Small ribosomal subunit protein uS4 (206 aa).

The 62-residue stretch at 96–157 (RRLDNVVYRM…KAKKQVRIQD (62 aa)) folds into the S4 RNA-binding domain.

This sequence belongs to the universal ribosomal protein uS4 family. Part of the 30S ribosomal subunit. Contacts protein S5. The interaction surface between S4 and S5 is involved in control of translational fidelity.

In terms of biological role, one of the primary rRNA binding proteins, it binds directly to 16S rRNA where it nucleates assembly of the body of the 30S subunit. Its function is as follows. With S5 and S12 plays an important role in translational accuracy. In Thioalkalivibrio sulfidiphilus (strain HL-EbGR7), this protein is Small ribosomal subunit protein uS4.